Here is a 376-residue protein sequence, read N- to C-terminus: Erythronate-4-phosphate dehydrogenase (376 aa).

Residues S45 and T67 each coordinate substrate. D147 contributes to the NAD(+) binding site. The active site involves R209. Position 233 (D233) interacts with NAD(+). Residue E238 is part of the active site. The active-site Proton donor is H255. G258 lines the NAD(+) pocket. Y259 is a binding site for substrate.

This sequence belongs to the D-isomer specific 2-hydroxyacid dehydrogenase family. PdxB subfamily. In terms of assembly, homodimer.

The protein localises to the cytoplasm. It carries out the reaction 4-phospho-D-erythronate + NAD(+) = (R)-3-hydroxy-2-oxo-4-phosphooxybutanoate + NADH + H(+). It participates in cofactor biosynthesis; pyridoxine 5'-phosphate biosynthesis; pyridoxine 5'-phosphate from D-erythrose 4-phosphate: step 2/5. Functionally, catalyzes the oxidation of erythronate-4-phosphate to 3-hydroxy-2-oxo-4-phosphonooxybutanoate. The sequence is that of Erythronate-4-phosphate dehydrogenase from Shewanella sp. (strain MR-4).